A 356-amino-acid polypeptide reads, in one-letter code: Tyrosine recombinase XerS (356 aa).

A Core-binding (CB) domain is found at 16–121 (IMPWYVLDYY…ALSSLYKYLT (106 aa)). The 186-residue stretch at 169 to 354 (AFLDYVDKEY…VNDEQKNALD (186 aa)) folds into the Tyr recombinase domain. Catalysis depends on residues R210, K234, H306, R309, and H332. The active-site O-(3'-phospho-DNA)-tyrosine intermediate is the Y341.

This sequence belongs to the 'phage' integrase family. XerS subfamily.

It localises to the cytoplasm. Its activity is regulated as follows. FtsK is required for recombination. In terms of biological role, site-specific tyrosine recombinase, which acts by catalyzing the cutting and rejoining of the recombining DNA molecules. Essential to convert dimers of the bacterial chromosome into monomers to permit their segregation at cell division. The sequence is that of Tyrosine recombinase XerS from Streptococcus pyogenes serotype M6 (strain ATCC BAA-946 / MGAS10394).